Reading from the N-terminus, the 149-residue chain is Macrodomain Ter protein (149 aa).

It belongs to the MatP family. Homodimer.

It is found in the cytoplasm. In terms of biological role, required for spatial organization of the terminus region of the chromosome (Ter macrodomain) during the cell cycle. Prevents early segregation of duplicated Ter macrodomains during cell division. Binds specifically to matS, which is a 13 bp signature motif repeated within the Ter macrodomain. The sequence is that of Macrodomain Ter protein from Vibrio vulnificus (strain CMCP6).